The primary structure comprises 211 residues: Redox-sensing transcriptional repressor Rex (211 aa).

The segment at residues 17 to 56 is a DNA-binding region (H-T-H motif); that stretch reads KYHRYLEELMKNEVDRISSKELGEKIGFTASQIRQDLNCF. 91 to 96 contributes to the NAD(+) binding site; sequence GAGNIG.

The protein belongs to the transcriptional regulatory Rex family. In terms of assembly, homodimer.

It is found in the cytoplasm. In terms of biological role, modulates transcription in response to changes in cellular NADH/NAD(+) redox state. The chain is Redox-sensing transcriptional repressor Rex from Clostridium beijerinckii (strain ATCC 51743 / NCIMB 8052) (Clostridium acetobutylicum).